Here is a 348-residue protein sequence, read N- to C-terminus: Dihydroorotase (348 aa).

2 residues coordinate Zn(2+): His17 and His19. Residues 19–21 and Asn45 contribute to the substrate site; that span reads HLR. The Zn(2+) site is built by Lys103, His140, and His178. Lys103 is modified (N6-carboxylysine). His140 is a substrate binding site. Leu223 is a binding site for substrate. Residue Asp251 participates in Zn(2+) binding. Asp251 is a catalytic residue. His255 and Ala267 together coordinate substrate.

This sequence belongs to the metallo-dependent hydrolases superfamily. DHOase family. Class II DHOase subfamily. In terms of assembly, homodimer. Requires Zn(2+) as cofactor. It depends on Co(2+) as a cofactor. Mg(2+) is required as a cofactor. The cofactor is Ni(2+).

It carries out the reaction (S)-dihydroorotate + H2O = N-carbamoyl-L-aspartate + H(+). Its pathway is pyrimidine metabolism; UMP biosynthesis via de novo pathway; (S)-dihydroorotate from bicarbonate: step 3/3. Functionally, catalyzes the reversible cyclization of carbamoyl aspartate to dihydroorotate. The polypeptide is Dihydroorotase (Klebsiella pneumoniae subsp. pneumoniae (strain ATCC 700721 / MGH 78578)).